The sequence spans 99 residues: MANNKSSKKRVEIGERNRLQNKAYKSALRTLMKRCFTACSAYIEAPGDEAKTTLTTSLNAAFSKIDKAVKRGVMHRNAGAHQKSRLSIAVKRAIEPSVS.

Belongs to the bacterial ribosomal protein bS20 family.

In terms of biological role, binds directly to 16S ribosomal RNA. The protein is Small ribosomal subunit protein bS20 of Synechococcus sp. (strain CC9311).